We begin with the raw amino-acid sequence, 370 residues long: Cyanuric acid amidohydrolase (370 aa).

Residues 1–106 (MRTTSVGVFK…TVFTRREVER (106 aa)) are RU A. Substrate is bound by residues Arg54 and 85–86 (SG). Residues 115–251 (RLSIGMAHTR…NVVIVLGNSA (137 aa)) form an RU B region. Lys165 is an active-site residue. Residues Arg197 and 234–235 (SA) contribute to the substrate site. Ser234 functions as the Nucleophile in the catalytic mechanism. The segment at 257 to 370 (FEIGHAVMND…PVAVIARLSD (114 aa)) is RU C. Glu302 contributes to the Mg(2+) binding site. Substrate is bound by residues Arg329 and 348–349 (SG). 5 residues coordinate Mg(2+): Ala351, Gln354, Gly355, Pro356, and Gly359.

Belongs to the cyclic amide hydrolase (CyAH) family. Homotetramer.

It catalyses the reaction cyanurate + H2O = 1-carboxybiuret + H(+). It functions in the pathway xenobiotic degradation; atrazine degradation; biuret from cyanurate: step 1/1. With respect to regulation, inhibited by barbituric acid. Functionally, responsible for the hydrolysis of cyanuric acid, an intermediate formed during catabolism of s-triazine based compounds in herbicides such as atrazine and polymers such as melamine. Catalyzes the hydrolytic opening of the s-triazine ring of cyanuric acid (2,4,6-trihydroxy-s-triazine) to yield carbon dioxide and carboxybiuret, which spontaneously decarboxylates to biuret. This chain is Cyanuric acid amidohydrolase, found in Bradyrhizobium diazoefficiens (strain JCM 10833 / BCRC 13528 / IAM 13628 / NBRC 14792 / USDA 110).